The primary structure comprises 182 residues: Proline-rich protein, Y-linked (182 aa).

2 disordered regions span residues 1–22 (MMRR…KPRD) and 89–108 (VPAD…PPPG). Over residues 91–108 (ADPPPASPYRTSPRPPPG) the composition is skewed to pro residues. The DUF1725 domain occupies 154 to 167 (WMKLETIILSKLSQ).

This Homo sapiens (Human) protein is Proline-rich protein, Y-linked (PRORY).